Here is a 150-residue protein sequence, read N- to C-terminus: FAD synthase (150 aa).

ATP is bound by residues 20-21, 25-28, and Asp-103; these read TF and HPGH.

Belongs to the archaeal FAD synthase family. Homodimer. The cofactor is a divalent metal cation.

The enzyme catalyses FMN + ATP + H(+) = FAD + diphosphate. Its pathway is cofactor biosynthesis; FAD biosynthesis; FAD from FMN: step 1/1. Catalyzes the transfer of the AMP portion of ATP to flavin mononucleotide (FMN) to produce flavin adenine dinucleotide (FAD) coenzyme. In Methanohalobium evestigatum (strain ATCC BAA-1072 / DSM 3721 / NBRC 107634 / OCM 161 / Z-7303), this protein is FAD synthase.